The sequence spans 186 residues: ADP-ribosylation factor-like protein 8A (186 aa).

An intramembrane region (note=Mediates targeting to membranes) is located at residues 1-19 (MIALFNKLLDWFKALFWKE). Residues 29–35 (QYSGKTT), 71–75 (DIGGQ), and 130–133 (NKRD) each bind GTP.

The protein belongs to the small GTPase superfamily. Arf family. Interacts with PLEKHM1. When GTP-bound, interacts with RUFY3 and RUFY4, but not with RUFY1, nor RUFY2. In terms of tissue distribution, ubiquitously expressed.

Its subcellular location is the late endosome membrane. The protein resides in the lysosome membrane. It is found in the cytoplasm. The protein localises to the cytoskeleton. It localises to the spindle. Its subcellular location is the cell projection. The protein resides in the axon. It is found in the synapse. Its function is as follows. Plays a role in lysosome motility. In neurons, mediates the anterograde axonal long-range transport of presynaptic lysosome-related vesicles required for presynaptic biogenesis and synaptic function. May play a role in chromosome segregation. In Homo sapiens (Human), this protein is ADP-ribosylation factor-like protein 8A (ARL8A).